A 315-amino-acid chain; its full sequence is NAD(P)H-dependent anabolic L-arginine dehydrogenase DauB (315 aa).

It belongs to the ornithine cyclodeaminase/mu-crystallin family.

The enzyme catalyses L-arginine + NAD(+) + H2O = 5-guanidino-2-oxopentanoate + NH4(+) + NADH + H(+). It carries out the reaction L-arginine + NADP(+) + H2O = 5-guanidino-2-oxopentanoate + NH4(+) + NADPH + H(+). Involved in the anabolism of D-lysine and D-arginine. Under aerobic conditions, the arginine succinyltransferase (AST) and arginine transaminase (ATA) pathways are 2 major routes for L-arginine utilization as the sole source of carbon and nitrogen. The D-to-L racemization of arginine by DauA and DauB is necessary, before to be channeled into the AST and/or ATA pathways. DauB catalyzes the synthesis of L-arginine from 2-ketoarginine (2-KA) and ammonium. This is NAD(P)H-dependent anabolic L-arginine dehydrogenase DauB from Pseudomonas aeruginosa (strain ATCC 15692 / DSM 22644 / CIP 104116 / JCM 14847 / LMG 12228 / 1C / PRS 101 / PAO1).